A 382-amino-acid chain; its full sequence is D-galactonate dehydratase (382 aa).

Aspartate 183 is a Mg(2+) binding site. The active-site Proton donor is the histidine 185. Mg(2+) contacts are provided by glutamate 209 and glutamate 235. Histidine 285 acts as the Proton acceptor in catalysis.

Belongs to the mandelate racemase/muconate lactonizing enzyme family. GalD subfamily. Mg(2+) serves as cofactor.

It catalyses the reaction D-galactonate = 2-dehydro-3-deoxy-D-galactonate + H2O. It functions in the pathway carbohydrate acid metabolism; D-galactonate degradation; D-glyceraldehyde 3-phosphate and pyruvate from D-galactonate: step 1/3. Its function is as follows. Catalyzes the dehydration of D-galactonate to 2-keto-3-deoxy-D-galactonate. The polypeptide is D-galactonate dehydratase (Escherichia coli (strain 55989 / EAEC)).